The primary structure comprises 274 residues: 3-methyl-2-oxobutanoate hydroxymethyltransferase (274 aa).

The Mg(2+) site is built by aspartate 49 and aspartate 88. 3-methyl-2-oxobutanoate-binding positions include 49-50, aspartate 88, and lysine 118; that span reads DS. Glutamate 120 provides a ligand contact to Mg(2+). Glutamate 187 (proton acceptor) is an active-site residue.

It belongs to the PanB family. In terms of assembly, homodecamer; pentamer of dimers. Requires Mg(2+) as cofactor.

It is found in the cytoplasm. The catalysed reaction is 3-methyl-2-oxobutanoate + (6R)-5,10-methylene-5,6,7,8-tetrahydrofolate + H2O = 2-dehydropantoate + (6S)-5,6,7,8-tetrahydrofolate. It participates in cofactor biosynthesis; (R)-pantothenate biosynthesis; (R)-pantoate from 3-methyl-2-oxobutanoate: step 1/2. Catalyzes the reversible reaction in which hydroxymethyl group from 5,10-methylenetetrahydrofolate is transferred onto alpha-ketoisovalerate to form ketopantoate. This is 3-methyl-2-oxobutanoate hydroxymethyltransferase from Parvibaculum lavamentivorans (strain DS-1 / DSM 13023 / NCIMB 13966).